Consider the following 267-residue polypeptide: MSKIAQPTATDVGAMYDNHTDLMTDIMAGFIHVGYWEDPENPTETIELATERMTLEVLNRLRPSPGQHILDVGCGTGKTAASIATTHDVSITGITVSNHQIEVARKTYEALVETGKLNFQYADAMQLPLANASFDGAYAIESIVHMNDRRAALSNIARVLRPGSRLSIADLVLDDGCPDPDAIANWHELFQVPALISADKLKELLTETGFRVLECVDIRQHIRPICGVMDKKGLQVGGEVGKTLRGVAASLHGLEELGYILLVAERV.

S-adenosyl-L-methionine-binding residues include Gln-100 and His-145.

The protein belongs to the methyltransferase superfamily.

The protein operates within antifungal biosynthesis. In terms of biological role, O-methyltransferase; part of the gene cluster that mediates the biosynthesis of the tetrahydropyranyl antifungal agent lanomycin that acts as an inhibitor of CYP51 and blocks the ergosterol biosynthesis. The biosynthesis probably begins with the formation of an hexaketide, followed by methionine mediated alkylation of C-2 and C-6, and methylation of the reduced C-3 oxygen, pyran forming reductive ring closure, oxygenation of C-4, beta-keto reduction, enoyl reduction and dehydration of the remaining oxygens, and finally, acylation with glycine to complete the biosynthesis. This is O-methyltransferase from Pyrenophora dematioidea (Helminthosporium dematioideum).